The sequence spans 24 residues: RuBisCO large subunit-binding protein subunit beta, chloroplastic (24 aa).

Belongs to the chaperonin (HSP60) family. In terms of assembly, oligomer of probably six alpha and six beta subunits.

Its subcellular location is the plastid. It is found in the chloroplast. In terms of biological role, this protein binds RuBisCO small and large subunits and is implicated in the assembly of the enzyme oligomer. The protein is RuBisCO large subunit-binding protein subunit beta, chloroplastic of Populus euphratica (Euphrates poplar).